A 560-amino-acid polypeptide reads, in one-letter code: Formate--tetrahydrofolate ligase (560 aa).

An ATP-binding site is contributed by 69-76 (TPAGEGKS).

It belongs to the formate--tetrahydrofolate ligase family.

It catalyses the reaction (6S)-5,6,7,8-tetrahydrofolate + formate + ATP = (6R)-10-formyltetrahydrofolate + ADP + phosphate. It functions in the pathway one-carbon metabolism; tetrahydrofolate interconversion. This is Formate--tetrahydrofolate ligase from Listeria monocytogenes serovar 1/2a (strain ATCC BAA-679 / EGD-e).